The following is a 424-amino-acid chain: Enolase (424 aa).

Residue Gln163 coordinates (2R)-2-phosphoglycerate. Residue Glu204 is the Proton donor of the active site. Residues Asp241, Glu284, and Asp311 each contribute to the Mg(2+) site. The (2R)-2-phosphoglycerate site is built by Lys336, Arg365, Ser366, and Lys387. The Proton acceptor role is filled by Lys336.

This sequence belongs to the enolase family. The cofactor is Mg(2+).

The protein localises to the cytoplasm. The protein resides in the secreted. Its subcellular location is the cell surface. The enzyme catalyses (2R)-2-phosphoglycerate = phosphoenolpyruvate + H2O. It functions in the pathway carbohydrate degradation; glycolysis; pyruvate from D-glyceraldehyde 3-phosphate: step 4/5. In terms of biological role, catalyzes the reversible conversion of 2-phosphoglycerate (2-PG) into phosphoenolpyruvate (PEP). It is essential for the degradation of carbohydrates via glycolysis. This chain is Enolase, found in Dictyoglomus thermophilum (strain ATCC 35947 / DSM 3960 / H-6-12).